Here is a 618-residue protein sequence, read N- to C-terminus: UvrABC system protein C (618 aa).

The GIY-YIG domain occupies 13–92 (DKPGVYLMKN…IKKYRPKYNI (80 aa)). One can recognise a UVR domain in the interval 204–239 (LDIVENFKLNMEKAAENLEFEKAAMLRDKINIIEKI).

The protein belongs to the UvrC family. As to quaternary structure, interacts with UvrB in an incision complex.

Its subcellular location is the cytoplasm. Its function is as follows. The UvrABC repair system catalyzes the recognition and processing of DNA lesions. UvrC both incises the 5' and 3' sides of the lesion. The N-terminal half is responsible for the 3' incision and the C-terminal half is responsible for the 5' incision. This Clostridium botulinum (strain Loch Maree / Type A3) protein is UvrABC system protein C.